The chain runs to 582 residues: Aspartate--tRNA ligase (582 aa).

The aspartate stretch occupies residues 198-201 (QIFK). Arg220 lines the L-aspartate pocket. ATP is bound by residues 220-222 (RDE) and Gln229. L-aspartate is bound at residue His445. Glu479 lines the ATP pocket. Position 486 (Arg486) interacts with L-aspartate. ATP is bound at residue 531-534 (GFDR).

It belongs to the class-II aminoacyl-tRNA synthetase family. Type 1 subfamily. Homodimer.

It localises to the cytoplasm. It catalyses the reaction tRNA(Asp) + L-aspartate + ATP = L-aspartyl-tRNA(Asp) + AMP + diphosphate. In terms of biological role, catalyzes the attachment of L-aspartate to tRNA(Asp) in a two-step reaction: L-aspartate is first activated by ATP to form Asp-AMP and then transferred to the acceptor end of tRNA(Asp). This is Aspartate--tRNA ligase from Amoebophilus asiaticus (strain 5a2).